Consider the following 98-residue polypeptide: Beta-elicitin MGM-beta (98 aa).

3 cysteine pairs are disulfide-bonded: Cys-3–Cys-71, Cys-27–Cys-56, and Cys-51–Cys-95.

The protein belongs to the elicitin family.

It localises to the secreted. In terms of biological role, induces local and distal defense responses (incompatible hypersensitive reaction) in plants from the solanaceae and cruciferae families. Elicits leaf necrosis and causes the accumulation of pathogenesis-related proteins. Might interact with the lipidic molecules of the plasma membrane. The chain is Beta-elicitin MGM-beta from Phytophthora megasperma (Potato pink rot fungus).